Consider the following 89-residue polypeptide: Protein M7 (89 aa).

An N-terminal signal peptide occupies residues Met-1–Ser-25. 4 disulfide bridges follow: Cys-28–Cys-65, Cys-38–Cys-54, Cys-55–Cys-80, and Cys-67–Cys-87.

Belongs to the A9/FIL1 family. Tapetum of anthers.

It localises to the secreted. In Lilium henryi (Henry's lily), this protein is Protein M7 (M7).